Reading from the N-terminus, the 121-residue chain is Putative iron-sulfur cluster insertion protein ErpA (121 aa).

Iron-sulfur cluster is bound by residues cysteine 49, cysteine 113, and cysteine 115.

This sequence belongs to the HesB/IscA family. Homodimer. Requires iron-sulfur cluster as cofactor.

Functionally, required for insertion of 4Fe-4S clusters. The polypeptide is Putative iron-sulfur cluster insertion protein ErpA (Nitrosomonas eutropha (strain DSM 101675 / C91 / Nm57)).